The primary structure comprises 1179 residues: Integrin alpha-1 (1179 aa).

An N-terminal signal peptide occupies residues 1-28 (MAPRPRARPGVAVACCWLLTVVLRCCVS). The Extracellular segment spans residues 29–1141 (FNVDVKNSMT…SKDGLPGRVP (1113 aa)). The FG-GAP 1 repeat unit spans residues 30–91 (NVDVKNSMTF…CPVGRGESLP (62 aa)). The N-linked (GlcNAc...) asparagine glycan is linked to asparagine 74. Cysteine 82 and cysteine 92 are oxidised to a cystine. Residues asparagine 100, asparagine 105, asparagine 112, asparagine 217, asparagine 317, asparagine 341, asparagine 402, asparagine 418, and asparagine 460 are each glycosylated (N-linked (GlcNAc...) asparagine). One copy of the FG-GAP 2 repeat lies at 101–160 (TSIPNVTEVKENMTFGSTLVTNPNGGFLACGPLYAYRCGHLHYTTGICSDVSPTFQVVNS). The region spanning 161–360 (IAPVQECSTQ…IVKTLGERIF (200 aa)) is the VWFA domain. The stretch at 365–417 (TADQSAASFEMEMSQTGFSAHYSQDWVMLGAVGAYDWNGTVVMQKASQIIIPR) is one FG-GAP 3 repeat. FG-GAP repeat units lie at residues 422–475 (NVES…DGNI), 476–538 (KILQ…RFEY), 557–615 (SCTT…TIRK), and 619–679 (QRIP…FEPN). Ca(2+)-binding residues include aspartate 498, aspartate 500, aspartate 502, and aspartate 506. Asparagine 532 carries N-linked (GlcNAc...) asparagine glycosylation. 8 residues coordinate Ca(2+): aspartate 580, asparagine 582, aspartate 584, aspartate 588, aspartate 642, asparagine 644, aspartate 646, and aspartate 650. A disulfide bond links cysteine 688 and cysteine 697. N-linked (GlcNAc...) asparagine glycosylation is found at asparagine 699, asparagine 748, and asparagine 780. A disulfide bridge links cysteine 703 with cysteine 756. A disulfide bridge connects residues cysteine 808 and cysteine 814. Asparagine 840, asparagine 883, asparagine 908, asparagine 915, asparagine 939, asparagine 966, asparagine 974, and asparagine 1008 each carry an N-linked (GlcNAc...) asparagine glycan. Residues cysteine 878 and cysteine 886 are joined by a disulfide bond. 2 disulfides stabilise this stretch: cysteine 1030–cysteine 1062 and cysteine 1065–cysteine 1072. 4 N-linked (GlcNAc...) asparagine glycosylation sites follow: asparagine 1073, asparagine 1083, asparagine 1102, and asparagine 1113. Residues 1142 to 1164 (LWVILLSAFAGLLLLMLLILALW) traverse the membrane as a helical segment. Topologically, residues 1165 to 1179 (KIGFFKRPLKKKMEK) are cytoplasmic. The short motif at 1167-1171 (GFFKR) is the GFFKR motif element.

It belongs to the integrin alpha chain family. As to quaternary structure, heterodimer of an alpha and a beta subunit. Alpha-1 associates with beta-1. Interacts with RAB21. Interacts (via cytoplasmic domain) with PTPN2; activates PTPN2 phosphatase activity towards EGFR and negatively regulates EGF signaling.

Its subcellular location is the membrane. Integrin alpha-1/beta-1 is a receptor for laminin and collagen. It recognizes the proline-hydroxylated sequence G-F-P-G-E-R in collagen. Involved in anchorage-dependent, negative regulation of EGF-stimulated cell growth. This is Integrin alpha-1 (ITGA1) from Homo sapiens (Human).